Reading from the N-terminus, the 156-residue chain is ATP synthase subunit b', organellar chromatophore (156 aa).

The helical transmembrane segment at 23-43 (TLPLMAIQVVFLTFILNAIFF) threads the bilayer.

It belongs to the ATPase B chain family. F-type ATPases have 2 components, F(1) - the catalytic core - and F(0) - the membrane proton channel. F(1) has five subunits: alpha(3), beta(3), gamma(1), delta(1), epsilon(1). F(0) has four main subunits: a(1), b(1), b'(1) and c(10-14). The alpha and beta chains form an alternating ring which encloses part of the gamma chain. F(1) is attached to F(0) by a central stalk formed by the gamma and epsilon chains, while a peripheral stalk is formed by the delta, b and b' chains.

Its subcellular location is the plastid. The protein resides in the organellar chromatophore thylakoid membrane. Its function is as follows. F(1)F(0) ATP synthase produces ATP from ADP in the presence of a proton or sodium gradient. F-type ATPases consist of two structural domains, F(1) containing the extramembraneous catalytic core and F(0) containing the membrane proton channel, linked together by a central stalk and a peripheral stalk. During catalysis, ATP synthesis in the catalytic domain of F(1) is coupled via a rotary mechanism of the central stalk subunits to proton translocation. In terms of biological role, component of the F(0) channel, it forms part of the peripheral stalk, linking F(1) to F(0). The b'-subunit is a diverged and duplicated form of b found in plants and photosynthetic bacteria. The chain is ATP synthase subunit b', organellar chromatophore from Paulinella chromatophora.